A 23-amino-acid chain; its full sequence is Acidic phospholipase A2 CHA-E6b (23 aa).

Belongs to the phospholipase A2 family. Group II subfamily. D49 sub-subfamily. Ca(2+) is required as a cofactor. In terms of processing, contains 7 disulfide bonds. As to expression, expressed by the venom gland.

The protein localises to the secreted. It catalyses the reaction a 1,2-diacyl-sn-glycero-3-phosphocholine + H2O = a 1-acyl-sn-glycero-3-phosphocholine + a fatty acid + H(+). Snake venom phospholipase A2 (PLA2) that shows high lipolytic (1200 umol/mg/min) and weak ADP-induced platelet aggregation activities. Also shows weak anticoagulant activity (IC(50) of about 1.0 uM). PLA2 catalyzes the calcium-dependent hydrolysis of the 2-acyl groups in 3-sn-phosphoglycerides. This Crotalus horridus (Timber rattlesnake) protein is Acidic phospholipase A2 CHA-E6b.